We begin with the raw amino-acid sequence, 386 residues long: Patatin-B1 (386 aa).

Residues 1–23 (MATTKSFLILFFMILATTSSTCA) form the signal peptide. Residues 32–229 (LSIDGGGIKG…TVGDPALLSL (198 aa)) form the PNPLA domain. Positions 36 to 41 (GGGIKG) match the GXGXXG motif. Residues 75–79 (GTSTG) carry the GXSXG motif. Ser77 serves as the catalytic Nucleophile. An N-linked (GlcNAc...) asparagine glycan is attached at Asn115. Asp215 functions as the Proton acceptor in the catalytic mechanism. The DGA/G motif lies at 215–217 (DGG).

Belongs to the patatin family.

The protein resides in the vacuole. Functionally, probable lipolytic acyl hydrolase (LAH), an activity which is thought to be involved in the response of tubers to pathogens. This is Patatin-B1 (PATB1) from Solanum tuberosum (Potato).